Consider the following 1396-residue polypeptide: DNA-directed RNA polymerase subunit beta' (1396 aa).

Positions 71, 73, 86, and 89 each coordinate Zn(2+). D462, D464, and D466 together coordinate Mg(2+). The Zn(2+) site is built by C810, C884, C891, and C894. The segment covering 1372–1382 (DEQLAQQREDA) has biased composition (basic and acidic residues). A disordered region spans residues 1372-1396 (DEQLAQQREDAMEPLPAEIALSDAE).

It belongs to the RNA polymerase beta' chain family. As to quaternary structure, the RNAP catalytic core consists of 2 alpha, 1 beta, 1 beta' and 1 omega subunit. When a sigma factor is associated with the core the holoenzyme is formed, which can initiate transcription. Mg(2+) is required as a cofactor. The cofactor is Zn(2+).

The enzyme catalyses RNA(n) + a ribonucleoside 5'-triphosphate = RNA(n+1) + diphosphate. Its function is as follows. DNA-dependent RNA polymerase catalyzes the transcription of DNA into RNA using the four ribonucleoside triphosphates as substrates. The chain is DNA-directed RNA polymerase subunit beta' from Caulobacter vibrioides (strain ATCC 19089 / CIP 103742 / CB 15) (Caulobacter crescentus).